The sequence spans 210 residues: Syntaxin-binding protein 6 (210 aa).

Position 2 is an N-acetylserine (serine 2). Positions 151-210 constitute a v-SNARE coiled-coil homology domain; it reads GNSILHSAADSVTSAVQKASQALNERGERLGRAEEKTEDLKNSAQQFAETAHKLAMKHKC.

Part of a ternary complex containing SNAP25 and STX1A that can be dissociated by NAPA and NSF. Interacts with STX4A.

The protein resides in the cytoplasm. Its subcellular location is the membrane. Forms non-fusogenic complexes with SNAP25 and STX1A and may thereby modulate the formation of functional SNARE complexes and exocytosis. The sequence is that of Syntaxin-binding protein 6 (STXBP6) from Bos taurus (Bovine).